The sequence spans 3313 residues: PHD finger protein rhinoceros (3313 aa).

Positions 1-16 (MSQRGKRGNQHHHQSH) are enriched in basic residues. The disordered stretch occupies residues 1-136 (MSQRGKRGNQ…QGASTSSSWQ (136 aa)). Composition is skewed to low complexity over residues 42 to 71 (PPNGATTAAAAIAAAAAAAAAAAAGTATGG) and 100 to 134 (LGAASSSSSITKSKSTKLAKSSSKSKSQGASTSSS). The segment at 323 to 373 (NVICDVCRSPDSEEANEMVFCDNCNICVHQACYGITAIPSGQWLCRTCSMG) adopts a PHD-type 1 zinc-finger fold. The segment at 375–409 (TPDCVLCPNKAGAMKSNKSGKHWAHVSCALWIPEV) adopts a C2HC pre-PHD-type zinc-finger fold. The PHD-type 2; degenerate zinc finger occupies 433 to 487 (LVCVLCRKRVGSCIQCSKHSMSKGKKENAGGASGGGSASVTSSMHKANKYATGTG). 17 disordered regions span residues 453 to 526 (MSKG…ARAQ), 708 to 1076 (LQSG…TKAA), 1107 to 1842 (KEAK…PPSH), 1961 to 2033 (AQKE…TMGN), 2104 to 2136 (PVTAQSGAGSNSNKLSDYDENTRMQSPFGRMQR), 2145 to 2164 (ARRSSSPSSVSESNDQPPAT), 2219 to 2252 (AAPQQQTTPTHQQQQQQQQQQQQQRTPNSQFNGG), 2353 to 2374 (PAYPAHPAHPAHPAHPAHPAHP), 2398 to 2514 (VAAK…PPPM), 2563 to 2587 (TTRGQPKPTPAPTAATTTNPLLHPV), 2647 to 2679 (ATGTGTSPSKHPAVSAAPVAPAPAPAANSQPPA), 2827 to 2871 (SCGL…SSSR), 2888 to 2954 (LAGA…IKIR), 2978 to 2998 (YEMTRRACPPKKRLTSNYSTP), 3017 to 3077 (DFDK…SATT), 3144 to 3233 (KAEK…SLPE), and 3259 to 3313 (YENS…CEVR). The span at 512-526 (KNDMTSEERNQARAQ) shows a compositional bias: basic and acidic residues. Positions 735-749 (KKLNNGAITSRTSSP) are enriched in polar residues. Residues 760 to 772 (STSTSTATATTAA) are compositionally biased toward low complexity. Positions 792–802 (GAATGTSTHNK) are enriched in polar residues. Low complexity-rich tracts occupy residues 803 to 861 (TQSQ…ASGI) and 894 to 912 (EAAAGASAASPNSRSATSS). Residues 919–934 (QQRRRQEPERERDGRG) show a composition bias toward basic and acidic residues. A compositionally biased stretch (polar residues) spans 942–955 (TVPNRTQPTKSKQS). A compositionally biased stretch (low complexity) spans 956 to 972 (TQADAGSGAGTGAAVET). Acidic residues predominate over residues 994–1003 (ESLSSDESEE). Residues 1015–1025 (AALSSGLAASG) show a composition bias toward low complexity. Polar residues predominate over residues 1058–1072 (VESNVSDSQNQQTIR). Basic and acidic residues-rich tracts occupy residues 1159–1168 (AADRMREPES) and 1178–1205 (KLKDSGSKQATEADKFGGGDKVRSKEQS). Low complexity predominate over residues 1250–1266 (EAKSTAPAAKPTAAKTS). Polar residues predominate over residues 1285–1301 (LKSSKPLQDTTFSTANE). Composition is skewed to low complexity over residues 1308-1324 (AATTATTTGMTTLGVAT), 1377-1404 (SSSSSGDSDSSSSSSSSGSSSSSGSGSD), and 1451-1464 (PAASAAAAAAAAAT). Polar residues predominate over residues 1475–1485 (TARTRQNSTNK). Positions 1551–1579 (SPEKQTARRKSRADESPKKIPNLEHEINQ) are enriched in basic and acidic residues. Residues 1638–1650 (PVVEPEVETEIEP) show a composition bias toward acidic residues. Positions 1667–1678 (TAPTHTQLSANA) are enriched in polar residues. Positions 1691–1702 (PAAPLPASPTPT) are enriched in pro residues. The segment covering 1722-1734 (SRWRSRRRRRRRS) has biased composition (basic residues). A coiled-coil region spans residues 1744–1773 (HTQHLLNEMEMARELEEERKNELLANASKY). Basic and acidic residues predominate over residues 1753-1765 (EMARELEEERKNE). Composition is skewed to polar residues over residues 1771–1781 (SKYSASTSSPA) and 1796–1805 (DSNSANSGGD). Positions 1806–1819 (QQQQQQQQPLPQQL) are enriched in low complexity. The segment covering 1823–1832 (SPSSEVASTI) has biased composition (polar residues). A compositionally biased stretch (low complexity) spans 1965–1984 (QQQQQQQQQQQQQQQQQQQQ). 2 stretches are compositionally biased toward polar residues: residues 1985–1999 (SCLYGNSSGPNSVAS) and 2007–2018 (MTANSGSYANSL). The span at 2019 to 2033 (TNTPNATPTNATMGN) shows a compositional bias: low complexity. Positions 2106–2118 (TAQSGAGSNSNKL) are enriched in polar residues. Low complexity-rich tracts occupy residues 2148-2157 (SSSPSSVSES) and 2222-2242 (QQQTTPTHQQQQQQQQQQQQQ). Over residues 2439-2451 (PVQPQPPTPPAPA) the composition is skewed to pro residues. Positions 2479–2488 (GSGGSGAPGR) are enriched in gly residues. The span at 2658–2679 (PAVSAAPVAPAPAPAANSQPPA) shows a compositional bias: low complexity. Residues 2891–2900 (ASGGGAGTAS) are compositionally biased toward gly residues. The span at 2909–2924 (CSSGSNNDNNGKTGAA) shows a compositional bias: polar residues. The span at 2935 to 2946 (KTLESSEDDHQT) shows a compositional bias: basic and acidic residues. Residues 3017-3026 (DFDKGEENNK) are compositionally biased toward basic and acidic residues. Residues 3046 to 3065 (KRPKSSKPKKDKKEKKRQKQ) show a composition bias toward basic residues. Residues 3179 to 3198 (TSPQGLLLNSFTPHSQNANA) show a composition bias toward polar residues. Residues 3268-3290 (SASGTGSASSNSCNSNSNNNNNN) are compositionally biased toward low complexity. A compositionally biased stretch (gly residues) spans 3291–3302 (GSGGGAASGGGS).

Belongs to the JADE family.

The protein resides in the nucleus. Functionally, may function as a negative regulator of the EGFR/Ras/MAPK signaling pathway during eye development. The sequence is that of PHD finger protein rhinoceros (rno) from Drosophila pseudoobscura pseudoobscura (Fruit fly).